We begin with the raw amino-acid sequence, 393 residues long: Dual specificity mitogen-activated protein kinase kinase 1 (393 aa).

Residues 1 to 27 are disordered; it reads MPKKKPTPIQLNPAPDGSAVNGTSSAE. Residues 68–361 enclose the Protein kinase domain; the sequence is FEKISELGAG…LKQLMVHAFI (294 aa). ATP is bound by residues 74-82 and Lys97; that span reads LGAGNGGVV. Asp190 (proton acceptor) is an active-site residue. Residues Ser218 and Ser222 each carry the phosphoserine; by RAF modification. The interval 270 to 307 is RAF1-binding; sequence ELELMFGCQVEGDAAETPPRPRTPGRPLSSYGMDSRPP. Thr286 bears the Phosphothreonine mark. Thr292 is modified (phosphothreonine; by MAPK1). Ser298 carries the post-translational modification Phosphoserine; by PAK.

Belongs to the protein kinase superfamily. STE Ser/Thr protein kinase family. MAP kinase kinase subfamily. Found in a complex with at least BRAF, HRAS, MAP2K1, MAPK3/ERK1 and RGS14. Forms a heterodimer with MAP2K2/MEK2. Forms heterodimers with KSR2 which further dimerize to form tetramers. Interacts with KSR1 or KSR2 and BRAF; the interaction with KSR1 or KSR2 mediates KSR1-BRAF or KSR2-BRAF dimerization. Interacts with ARBB2, LAMTOR3, MAPK1/ERK2 and RAF1. Interacts with MAPK1/ERK2. Interacts with MORG1. Interacts with PPARG. Interacts with SGK1. Interacts with BIRC6/bruce. Interacts with KAT7; the interaction promotes KAT7 phosphorylation. Interacts with RAF1 and NEK10; the interaction is required for ERK1/2-signaling pathway activation in response to UV irradiation. Interacts with TRAF3IP3. Interacts with MOS. Phosphorylation at Ser-218 and Ser-222 by MAP kinase kinase kinases (RAF or MEKK1) positively regulates the kinase activity. Also phosphorylated at Thr-292 by MAPK1/ERK2 and at Ser-298 by PAK. MAPK1/ERK2 phosphorylation of Thr-292 occurs in response to cellular adhesion and leads to inhibition of Ser-298 phosphorylation by PAK. Autophosphorylated at Ser-218 and Ser-222, autophosphosphorylation is promoted by NEK10 following UV irradiation.

It localises to the cytoplasm. It is found in the cytoskeleton. Its subcellular location is the microtubule organizing center. The protein resides in the centrosome. The protein localises to the spindle pole body. It localises to the nucleus. It is found in the membrane. It carries out the reaction L-seryl-[protein] + ATP = O-phospho-L-seryl-[protein] + ADP + H(+). The catalysed reaction is L-threonyl-[protein] + ATP = O-phospho-L-threonyl-[protein] + ADP + H(+). It catalyses the reaction L-tyrosyl-[protein] + ATP = O-phospho-L-tyrosyl-[protein] + ADP + H(+). With respect to regulation, ras proteins such as HRAS mediate the activation of RAF proteins such as RAF1 or BRAF which in turn activate extracellular signal-regulated kinases (ERK) through MAPK (mitogen-activated protein kinases) and ERK kinases MAP2K1/MEK1 and MAP2K2/MEK2. Activation occurs through phosphorylation of Ser-218 and Ser-222. MAP2K1/MEK1 binds KSR1 or KSR2 releasing the inhibitory intramolecular interaction between KSR1 or KSR2 protein kinase and N-terminal domains. This allows KSR1 or KSR2 dimerization with BRAF leading to BRAF activation and phosphorylation of MAP2K1. MAP2K1/MEK1 is also the target of negative feed-back regulation by its substrate kinases, such as MAPK1/ERK2. These phosphorylate MAP2K1/MEK1 on Thr-292, thereby facilitating dephosphorylation of the activating residues Ser-218 and Ser-222. Inhibited by serine/threonine phosphatase 2A. In terms of biological role, dual specificity protein kinase which acts as an essential component of the MAP kinase signal transduction pathway. Binding of extracellular ligands such as growth factors, cytokines and hormones to their cell-surface receptors activates RAS and this initiates RAF1 activation. RAF1 then further activates the dual-specificity protein kinases MAP2K1/MEK1 and MAP2K2/MEK2. Both MAP2K1/MEK1 and MAP2K2/MEK2 function specifically in the MAPK/ERK cascade, and catalyze the concomitant phosphorylation of a threonine and a tyrosine residue in a Thr-Glu-Tyr sequence located in the extracellular signal-regulated kinases MAPK3/ERK1 and MAPK1/ERK2, leading to their activation and further transduction of the signal within the MAPK/ERK cascade. Activates BRAF in a KSR1 or KSR2-dependent manner; by binding to KSR1 or KSR2 releases the inhibitory intramolecular interaction between KSR1 or KSR2 protein kinase and N-terminal domains which promotes KSR1 or KSR2-BRAF dimerization and BRAF activation. Depending on the cellular context, this pathway mediates diverse biological functions such as cell growth, adhesion, survival and differentiation, predominantly through the regulation of transcription, metabolism and cytoskeletal rearrangements. One target of the MAPK/ERK cascade is peroxisome proliferator-activated receptor gamma (PPARG), a nuclear receptor that promotes differentiation and apoptosis. MAP2K1/MEK1 has been shown to export PPARG from the nucleus. The MAPK/ERK cascade is also involved in the regulation of endosomal dynamics, including lysosome processing and endosome cycling through the perinuclear recycling compartment (PNRC), as well as in the fragmentation of the Golgi apparatus during mitosis. The polypeptide is Dual specificity mitogen-activated protein kinase kinase 1 (MAP2K1) (Oryctolagus cuniculus (Rabbit)).